The following is a 532-amino-acid chain: Alkaline phosphatase (532 aa).

The interval 1 to 20 (MASERDPLLPVHGEGPESPS) is disordered. The helical; Signal-anchor for type II membrane protein transmembrane segment at 27–47 (WIKHGILLILVLSTVIFFYFF) threads the bilayer. Mg(2+) is bound at residue Asp-68. Asp-68 lines the Zn(2+) pocket. The Phosphoserine intermediate role is filled by Ser-115. Mg(2+) contacts are provided by Asp-166, Thr-168, and Glu-306. Residues Asp-311, His-315, Asp-352, His-353, and His-456 each contribute to the Zn(2+) site.

The protein belongs to the alkaline phosphatase family. Mg(2+) is required as a cofactor. Requires Zn(2+) as cofactor.

It is found in the membrane. The catalysed reaction is a phosphate monoester + H2O = an alcohol + phosphate. This is Alkaline phosphatase from Schizosaccharomyces pombe (strain 972 / ATCC 24843) (Fission yeast).